The following is a 706-amino-acid chain: Cyclic nucleotide-gated ion channel 18 (706 aa).

Topologically, residues 1–53 are cytoplasmic; sequence MNKIRSLRCLLPETITSASTAASNRGSDGSQFSVLWRHQILDPDSNIVTYWNH. Residues 54–74 form a helical membrane-spanning segment; the sequence is VFLITSILALFLDPFYFYVPY. At 75–86 the chain is on the extracellular side; sequence VGGPACLSIDIS. The helical transmembrane segment at 87-107 threads the bilayer; it reads LAATVTFFRTVADIFHLLHIF. Residues 108–142 are Cytoplasmic-facing; that stretch reads MKFRTAFVARSSRVFGRGELVMDSREIAMRYLKTD. A helical membrane pass occupies residues 143-163; sequence FLIDVAAMLPLPQLVIWLVIP. Topologically, residues 164–174 are extracellular; it reads AATNGTANHAN. A helical membrane pass occupies residues 175–195; that stretch reads STLALIVLVQYIPRSFIIFPL. Residues 196-217 are Cytoplasmic-facing; that stretch reads NQRIIKTTGFIAKTAWAGAAYN. A helical transmembrane segment spans residues 218–238; the sequence is LLLYILASHVLGAMWYLSSIG. The Extracellular segment spans residues 239-345; the sequence is RQFSCWSNVC…ITTSVYLGET (107 aa). A helical transmembrane segment spans residues 346 to 366; the sequence is LFCITICIFGLILFTLLIGNM. The Cytoplasmic portion of the chain corresponds to 367-706; it reads QSSLQSMSVR…PDFSIDKEDV (340 aa). A nucleoside 3',5'-cyclic phosphate is bound by residues 449–579 and Glu520; that span reads FFSQ…AFRY. A calmodulin-binding region spans residues 565-580; that stretch reads FKRLQSKKLQHAFRYY. Positions 585 to 614 constitute an IQ domain; it reads RAWGACFVQSAWRRYKRRKLAKELSLHESS. A disordered region spans residues 661-706; sequence ANTRRGTNQKASSSSTGKKDGSSTSLKMPQLFKPDEPDFSIDKEDV. Residues 693-706 are compositionally biased toward basic and acidic residues; that stretch reads KPDEPDFSIDKEDV.

This sequence belongs to the cyclic nucleotide-gated cation channel (TC 1.A.1.5) family. Homomultimer. Interacts with CPK32. As to expression, expressed in pollen grains. Not detected in leaves, roots or root hairs.

The protein resides in the cell membrane. It is found in the cytoplasmic vesicle membrane. Functionally, cyclic nucleotide-gated ion channel required for directional pollen tube growth into the transmitting tract. Acts as a Ca(2+)-permeable divalent cation-selective channel inhibited by either lanthanum or gadolinium. Regulated by CPK32 to mediate Ca(2+) transport across the plasma membrane in response to Ca(2+) oscillation. The chain is Cyclic nucleotide-gated ion channel 18 from Arabidopsis thaliana (Mouse-ear cress).